A 136-amino-acid chain; its full sequence is Large ribosomal subunit protein uL16 (136 aa).

This sequence belongs to the universal ribosomal protein uL16 family. As to quaternary structure, part of the 50S ribosomal subunit.

Binds 23S rRNA and is also seen to make contacts with the A and possibly P site tRNAs. This chain is Large ribosomal subunit protein uL16, found in Shewanella piezotolerans (strain WP3 / JCM 13877).